Consider the following 182-residue polypeptide: Coiled-coil domain-containing protein 32 (182 aa).

Residues 1 to 10 (MMIDDFETHA) show a composition bias toward basic and acidic residues. 2 disordered regions span residues 1-61 (MMID…FSPW) and 153-182 (PTQN…SPEK). The segment covering 153–167 (PTQNSETPASSSQTD) has biased composition (polar residues). Over residues 172–182 (EEEEECPSPEK) the composition is skewed to acidic residues.

Associates with adaptor protein complex 2 (AP-2).

Its subcellular location is the membrane. The protein resides in the coated pit. Regulates clathrin-mediated endocytsois of cargos such as transferrin probably through the association and modulation of adaptor protein complex 2 (AP-2). Has a role in ciliogenesis and is required for proper cephalic and left/right axis development. The polypeptide is Coiled-coil domain-containing protein 32 (Danio rerio (Zebrafish)).